We begin with the raw amino-acid sequence, 102 residues long: Protein RnfH (102 aa).

This sequence belongs to the UPF0125 (RnfH) family.

This is Protein RnfH from Haemophilus influenzae (strain PittEE).